Here is a 692-residue protein sequence, read N- to C-terminus: Elongation factor G (692 aa).

The tr-type G domain maps to 8 to 282; that stretch reads ENTRNIGIMA…AVIDYLPSPL (275 aa). Residues 17-24, 81-85, and 135-138 contribute to the GTP site; these read AHIDAGKT, DTPGH, and NKMD.

Belongs to the TRAFAC class translation factor GTPase superfamily. Classic translation factor GTPase family. EF-G/EF-2 subfamily.

The protein localises to the cytoplasm. Its function is as follows. Catalyzes the GTP-dependent ribosomal translocation step during translation elongation. During this step, the ribosome changes from the pre-translocational (PRE) to the post-translocational (POST) state as the newly formed A-site-bound peptidyl-tRNA and P-site-bound deacylated tRNA move to the P and E sites, respectively. Catalyzes the coordinated movement of the two tRNA molecules, the mRNA and conformational changes in the ribosome. The sequence is that of Elongation factor G from Bacillus anthracis (strain CDC 684 / NRRL 3495).